The chain runs to 279 residues: Ultraviolet N-glycosylase/AP lyase (279 aa).

A HhH domain is found at 123–142; it reads LEDLVALPGVGRKTAFVVLG. Residues Cys-203, Cys-210, Cys-213, and Cys-219 each coordinate [4Fe-4S] cluster. Residues 256–279 are disordered; it reads TAGAAGPRPRAGGXAPGLPAQPFR.

Belongs to the Nth/MutY family. [4Fe-4S] cluster is required as a cofactor.

In terms of biological role, DNA repair enzyme that has both DNA N-glycosylase activity and AP-lyase activity. Initiates repair at cis-syn pyrimidine dimers. Proceeds via an imino enzyme:DNA intermediate. This chain is Ultraviolet N-glycosylase/AP lyase (pdg), found in Micrococcus luteus (strain ATCC 4698 / DSM 20030 / JCM 1464 / CCM 169 / CCUG 5858 / IAM 1056 / NBRC 3333 / NCIMB 9278 / NCTC 2665 / VKM Ac-2230) (Micrococcus lysodeikticus).